Consider the following 199-residue polypeptide: NADH-quinone oxidoreductase subunit C (199 aa).

Belongs to the complex I 30 kDa subunit family. In terms of assembly, NDH-1 is composed of 14 different subunits. Subunits NuoB, C, D, E, F, and G constitute the peripheral sector of the complex.

The protein resides in the cell inner membrane. The enzyme catalyses a quinone + NADH + 5 H(+)(in) = a quinol + NAD(+) + 4 H(+)(out). Functionally, NDH-1 shuttles electrons from NADH, via FMN and iron-sulfur (Fe-S) centers, to quinones in the respiratory chain. The immediate electron acceptor for the enzyme in this species is believed to be ubiquinone. Couples the redox reaction to proton translocation (for every two electrons transferred, four hydrogen ions are translocated across the cytoplasmic membrane), and thus conserves the redox energy in a proton gradient. This is NADH-quinone oxidoreductase subunit C from Cupriavidus taiwanensis (strain DSM 17343 / BCRC 17206 / CCUG 44338 / CIP 107171 / LMG 19424 / R1) (Ralstonia taiwanensis (strain LMG 19424)).